The chain runs to 429 residues: Ribosomal RNA small subunit methyltransferase B (429 aa).

Residues 254–260 (CSAPGGK), D277, D303, and D322 each bind S-adenosyl-L-methionine. The active-site Nucleophile is C375. Residues 397-419 (ALSETGTPDQPGQQNLPGGEEGD) form a disordered region. The span at 400-412 (ETGTPDQPGQQNL) shows a compositional bias: polar residues.

Belongs to the class I-like SAM-binding methyltransferase superfamily. RsmB/NOP family.

The protein resides in the cytoplasm. It carries out the reaction cytidine(967) in 16S rRNA + S-adenosyl-L-methionine = 5-methylcytidine(967) in 16S rRNA + S-adenosyl-L-homocysteine + H(+). In terms of biological role, specifically methylates the cytosine at position 967 (m5C967) of 16S rRNA. The chain is Ribosomal RNA small subunit methyltransferase B from Salmonella dublin (strain CT_02021853).